An 888-amino-acid polypeptide reads, in one-letter code: DNA mismatch repair protein MutS (888 aa).

The disordered stretch occupies residues 249–271 (IGQRPPLSPPSREASGSTMAIDP). An ATP-binding site is contributed by 638–645 (GPNMAGKS).

This sequence belongs to the DNA mismatch repair MutS family.

This protein is involved in the repair of mismatches in DNA. It is possible that it carries out the mismatch recognition step. This protein has a weak ATPase activity. The protein is DNA mismatch repair protein MutS of Nitrobacter winogradskyi (strain ATCC 25391 / DSM 10237 / CIP 104748 / NCIMB 11846 / Nb-255).